Here is a 422-residue protein sequence, read N- to C-terminus: UDP-N-acetylglucosamine 1-carboxyvinyltransferase (422 aa).

Position 22-23 (22-23 (KN)) interacts with phosphoenolpyruvate. Arg-94 contributes to the UDP-N-acetyl-alpha-D-glucosamine binding site. Cys-118 functions as the Proton donor in the catalytic mechanism. 2-(S-cysteinyl)pyruvic acid O-phosphothioketal is present on Cys-118. Residues 123 to 127 (RPVDL), 163 to 166 (KVSV), Asp-308, and Ile-330 contribute to the UDP-N-acetyl-alpha-D-glucosamine site.

The protein belongs to the EPSP synthase family. MurA subfamily.

It localises to the cytoplasm. The enzyme catalyses phosphoenolpyruvate + UDP-N-acetyl-alpha-D-glucosamine = UDP-N-acetyl-3-O-(1-carboxyvinyl)-alpha-D-glucosamine + phosphate. The protein operates within cell wall biogenesis; peptidoglycan biosynthesis. Its function is as follows. Cell wall formation. Adds enolpyruvyl to UDP-N-acetylglucosamine. The protein is UDP-N-acetylglucosamine 1-carboxyvinyltransferase of Yersinia enterocolitica serotype O:8 / biotype 1B (strain NCTC 13174 / 8081).